The primary structure comprises 106 residues: MRGNIAQLMQQAQKMQENLQRAQEELAKLEVTGSAGGGMVSVTLTGAKECRKVRIDPSILSDQEMAEDLIAAAFNDASNKIDAESKDRMGSATAGMQLPPGMKLPF.

A disordered region spans residues 81-106 (IDAESKDRMGSATAGMQLPPGMKLPF).

Belongs to the YbaB/EbfC family. As to quaternary structure, homodimer.

The protein localises to the cytoplasm. Its subcellular location is the nucleoid. Binds to DNA and alters its conformation. May be involved in regulation of gene expression, nucleoid organization and DNA protection. The chain is Nucleoid-associated protein XCV1128 from Xanthomonas euvesicatoria pv. vesicatoria (strain 85-10) (Xanthomonas campestris pv. vesicatoria).